We begin with the raw amino-acid sequence, 316 residues long: MIEFEKPNIHKIDESNNYGKFIVEPLERGYGTTLGNSLRRILLSSLPGAAVTSIQIDGVLHEFSTVEGVVEDVTQIILNVKKIALKLNGSDDQEETMEINVKGPAQITAGDIVAGADVDILNPDLYIATVADGATFHMRMTADKGRGYVSADENKTRNTDMPIGVLAVDSIYTPIERVNYQVENARVGQRADYDKLTLDVWTNGSINPSEAIALAAKILTEHLAMFVDLTDEAKNAEIMVEKEETHKEKMLEMTIEELDLSVRSYNCLKRAGINTVQELNNKTEADMMKVRNLGRKSLEEVKAKLADLGLSLRKED.

An alpha N-terminal domain (alpha-NTD) region spans residues 1–230 (MIEFEKPNIH…EHLAMFVDLT (230 aa)). The alpha C-terminal domain (alpha-CTD) stretch occupies residues 247–316 (KEKMLEMTIE…DLGLSLRKED (70 aa)).

The protein belongs to the RNA polymerase alpha chain family. Homodimer. The RNAP catalytic core consists of 2 alpha, 1 beta, 1 beta' and 1 omega subunit. When a sigma factor is associated with the core the holoenzyme is formed, which can initiate transcription.

The enzyme catalyses RNA(n) + a ribonucleoside 5'-triphosphate = RNA(n+1) + diphosphate. Its function is as follows. DNA-dependent RNA polymerase catalyzes the transcription of DNA into RNA using the four ribonucleoside triphosphates as substrates. In Levilactobacillus brevis (strain ATCC 367 / BCRC 12310 / CIP 105137 / JCM 1170 / LMG 11437 / NCIMB 947 / NCTC 947) (Lactobacillus brevis), this protein is DNA-directed RNA polymerase subunit alpha.